The following is a 214-amino-acid chain: Protein DEHYDRATION-INDUCED 19 homolog 5 (214 aa).

Serine 110 carries the post-translational modification Phosphoserine. The disordered stretch occupies residues 148-185 (PKKSKLVQPDSSSEASMEDNSLIRDSTEKDWESPSPLS). Residues 156–166 (PDSSSEASMED) show a composition bias toward polar residues. Residues 168–179 (SLIRDSTEKDWE) show a composition bias toward basic and acidic residues.

This sequence belongs to the Di19 family. Post-translationally, phosphorylated in vitro by CPK3 or CPK11. In terms of tissue distribution, expressed in seedlings, roots, leaves, stems, flowers and siliques.

It is found in the nucleus. The polypeptide is Protein DEHYDRATION-INDUCED 19 homolog 5 (DI19-5) (Arabidopsis thaliana (Mouse-ear cress)).